Here is a 25-residue protein sequence, read N- to C-terminus: Histone H4 (25 aa).

The span at 1–14 shows a compositional bias: gly residues; that stretch reads MSGRGKGGKGLGKG. Positions 1 to 25 are disordered; that stretch reads MSGRGKGGKGLGKGGAKRHRKVLRD. Ser-2 bears the N-acetylserine mark. Lys-6, Lys-9, Lys-13, Lys-17, and Lys-21 each carry N6-acetyllysine. Over residues 15-25 the composition is skewed to basic residues; it reads GAKRHRKVLRD. The DNA-binding element occupies 17-21; it reads KRHRK.

Belongs to the histone H4 family. The nucleosome is a histone octamer containing two molecules each of H2A, H2B, H3 and H4 assembled in one H3-H4 heterotetramer and two H2A-H2B heterodimers. The octamer wraps approximately 147 bp of DNA.

The protein localises to the nucleus. The protein resides in the chromosome. Core component of nucleosome. Nucleosomes wrap and compact DNA into chromatin, limiting DNA accessibility to the cellular machineries which require DNA as a template. Histones thereby play a central role in transcription regulation, DNA repair, DNA replication and chromosomal stability. DNA accessibility is regulated via a complex set of post-translational modifications of histones, also called histone code, and nucleosome remodeling. The chain is Histone H4 from Medicago sativa (Alfalfa).